Here is a 62-residue protein sequence, read N- to C-terminus: uncharacterized protein (62 aa).

Residues tyrosine 26–glycine 62 adopt a coiled-coil conformation.

This is an uncharacterized protein from Bacillus subtilis (strain 168).